Here is a 179-residue protein sequence, read N- to C-terminus: Outer-membrane lipoprotein carrier protein (179 aa).

An N-terminal signal peptide occupies residues 1 to 22; sequence MEVLRRYVLVFTSLCMTLFAWG.

This sequence belongs to the LolA family. As to quaternary structure, monomer.

The protein localises to the periplasm. In terms of biological role, participates in the translocation of lipoproteins from the inner membrane to the outer membrane. Only forms a complex with a lipoprotein if the residue after the N-terminal Cys is not an aspartate (The Asp acts as a targeting signal to indicate that the lipoprotein should stay in the inner membrane). In Helicobacter hepaticus (strain ATCC 51449 / 3B1), this protein is Outer-membrane lipoprotein carrier protein.